Consider the following 133-residue polypeptide: Small ribosomal subunit protein uS11 (133 aa).

The protein belongs to the universal ribosomal protein uS11 family. As to quaternary structure, part of the 30S ribosomal subunit. Interacts with proteins S7 and S18. Binds to IF-3.

Its function is as follows. Located on the platform of the 30S subunit, it bridges several disparate RNA helices of the 16S rRNA. Forms part of the Shine-Dalgarno cleft in the 70S ribosome. The protein is Small ribosomal subunit protein uS11 of Bordetella avium (strain 197N).